The following is a 478-amino-acid chain: MSHTSRVFFPPAFVEQMQQLLPDADEFQRFITSSQLPLRRSLRVNTLKISVDDFLTLVEPYQWALTPIPWCQEGFWISRDDADTLPLGSTAEHLAGLFYIQEASSMLPVSALFDGGDMPQRVMDMAAAPGSKTTQIAAHMGNRGAILANEYSASRVKVLHANLSRCGVSNTAMTHFDGRVFGPALPECFDAVLLDAPCSGEGVVRKDADALRNWSQSSTEEIAATQQALINSAFHALRPGGTLVYSTCTLNTRENQQVVNGLLEQYPDAVKVEPLDTLFMGAERATTAEGYLHVFPHIFDSEGFFVARLRKVASVPPMPQPGYKVGKPPFTPLNRVQQQEVIAAAASVGLRWDTELKLWQRDKELWLFPSEIEPLLGRVRFSRIGLKLAETFPKGFRWQHHAAVALADAASANAFELNSNEAEEWYRGRDIYPERDLPASELIICYQQRPIGIAKKVGSRIKNNYPRELVRDGKLFTL.

Residues 126–132, Glu-150, Asp-177, and Asp-195 each bind S-adenosyl-L-methionine; that span reads AAAPGSK. Cys-248 functions as the Nucleophile in the catalytic mechanism.

The protein belongs to the class I-like SAM-binding methyltransferase superfamily. RsmB/NOP family.

Its subcellular location is the cytoplasm. The catalysed reaction is cytidine(1407) in 16S rRNA + S-adenosyl-L-methionine = 5-methylcytidine(1407) in 16S rRNA + S-adenosyl-L-homocysteine + H(+). Specifically methylates the cytosine at position 1407 (m5C1407) of 16S rRNA. In Erwinia tasmaniensis (strain DSM 17950 / CFBP 7177 / CIP 109463 / NCPPB 4357 / Et1/99), this protein is Ribosomal RNA small subunit methyltransferase F.